Here is a 252-residue protein sequence, read N- to C-terminus: Probable endonuclease 4 (252 aa).

Positions 56, 96, 129, 162, 165, 191, 204, 206, and 233 each coordinate Zn(2+).

Belongs to the AP endonuclease 2 family. The cofactor is Zn(2+).

It catalyses the reaction Endonucleolytic cleavage to 5'-phosphooligonucleotide end-products.. In terms of biological role, endonuclease IV plays a role in DNA repair. It cleaves phosphodiester bonds at apurinic or apyrimidinic (AP) sites, generating a 3'-hydroxyl group and a 5'-terminal sugar phosphate. This chain is Probable endonuclease 4, found in Mycobacterium leprae (strain Br4923).